Reading from the N-terminus, the 98-residue chain is Small ribosomal subunit protein uS19 (98 aa).

Residues 77–98 (TRTFRGHAGGKAEKGGSAPKKK) are disordered.

This sequence belongs to the universal ribosomal protein uS19 family.

In terms of biological role, protein S19 forms a complex with S13 that binds strongly to the 16S ribosomal RNA. The polypeptide is Small ribosomal subunit protein uS19 (Chlorobium phaeobacteroides (strain DSM 266 / SMG 266 / 2430)).